The sequence spans 931 residues: Dual serine/threonine and tyrosine protein kinase (931 aa).

The segment at 1-24 (MEGDAPQRVSERVSGPGPGGGGGG) is disordered. The stretch at 397–424 (RKKENELYESLMNIANRKQEEMKDMICE) forms a coiled coil. A Protein kinase domain is found at 654-908 (PKLGQELGRG…PLLGIVQPML (255 aa)). Residues 660–668 (LGRGQYGVV) and K683 each bind ATP. D779 acts as the Proton acceptor in catalysis.

This sequence belongs to the protein kinase superfamily. Ser/Thr protein kinase family.

The protein localises to the cytoplasm. It is found in the cell membrane. It localises to the apical cell membrane. The protein resides in the basolateral cell membrane. Its subcellular location is the cell junction. It carries out the reaction L-seryl-[protein] + ATP = O-phospho-L-seryl-[protein] + ADP + H(+). It catalyses the reaction L-threonyl-[protein] + ATP = O-phospho-L-threonyl-[protein] + ADP + H(+). The enzyme catalyses L-tyrosyl-[protein] + ATP = O-phospho-L-tyrosyl-[protein] + ADP + H(+). Acts as a positive regulator of ERK phosphorylation downstream of fibroblast growth factor-receptor activation. Involved in the regulation of both caspase-dependent apoptosis and caspase-independent cell death. In the skin, it plays a predominant role in suppressing caspase-dependent apoptosis in response to UV stress in a range of dermal cell types. This is Dual serine/threonine and tyrosine protein kinase (DSTYK) from Canis lupus familiaris (Dog).